Here is a 262-residue protein sequence, read N- to C-terminus: Transcription factor Spi-B (262 aa).

Residues 1 to 31 (MLALEAAQLDGPHFSCLYPDGVFYDLDSCKH) are TAD1 (Acidic). Residues 41–61 (PDSLWDWTVAPPVPATPYEAF) form a TAD2 region. Positions 140–163 (ALEVSDSESDEALVAGPEGKGSEA) are disordered. The segment at residues 169–252 (LRLYQFLLGL…VKRKLTYQFD (84 aa)) is a DNA-binding region (ETS).

It belongs to the ETS family. Can form homotypic interactions. Interacts with IRF4/Pip. Interacts with JUN. Interacts with TBP. May also interact with CREBBP and EP300. Interacts with NONO/p54(nrb). As to expression, expressed in plasmacytoid dendritic cells (pDCs) and B-cells, not expressed in T-cells or granulocytes. May also be enriched in stem cell populations of the liver.

The protein resides in the nucleus. Its subcellular location is the cytoplasm. In terms of biological role, sequence specific transcriptional activator which binds to the PU-box, a purine-rich DNA sequence (5'-GAGGAA-3') that can act as a lymphoid-specific enhancer. Promotes development of plasmacytoid dendritic cells (pDCs), also known as type 2 DC precursors (pre-DC2) or natural interferon (IFN)-producing cells. These cells have the capacity to produce large amounts of interferon and block viral replication. May be required for B-cell receptor (BCR) signaling, which is necessary for normal B-cell development and antigenic stimulation. This is Transcription factor Spi-B (SPIB) from Homo sapiens (Human).